The primary structure comprises 458 residues: Phosphoglucosamine mutase (458 aa).

Residue serine 102 is the Phosphoserine intermediate of the active site. 4 residues coordinate Mg(2+): serine 102, aspartate 252, aspartate 254, and aspartate 256. At serine 102 the chain carries Phosphoserine.

Belongs to the phosphohexose mutase family. The cofactor is Mg(2+). Activated by phosphorylation.

The catalysed reaction is alpha-D-glucosamine 1-phosphate = D-glucosamine 6-phosphate. Its function is as follows. Catalyzes the conversion of glucosamine-6-phosphate to glucosamine-1-phosphate. This is Phosphoglucosamine mutase from Anaeromyxobacter dehalogenans (strain 2CP-C).